Consider the following 668-residue polypeptide: Eukaryotic translation initiation factor 3 subunit L (668 aa).

Residues Met1–Asn17 are compositionally biased toward polar residues. The segment at Met1 to Glu42 is disordered. Residues Gln18–Gly32 are compositionally biased toward low complexity. Acidic residues predominate over residues Gly33 to Glu42. The PCI domain occupies Ser358 to Phe552. The tract at residues Ala625–Ala668 is disordered. Low complexity predominate over residues Lys648–Pro662.

This sequence belongs to the eIF-3 subunit L family. As to quaternary structure, component of the eukaryotic translation initiation factor 3 (eIF-3) complex.

The protein localises to the cytoplasm. In terms of biological role, component of the eukaryotic translation initiation factor 3 (eIF-3) complex, which is involved in protein synthesis of a specialized repertoire of mRNAs and, together with other initiation factors, stimulates binding of mRNA and methionyl-tRNAi to the 40S ribosome. The eIF-3 complex specifically targets and initiates translation of a subset of mRNAs involved in cell proliferation. This is Eukaryotic translation initiation factor 3 subunit L from Mycosarcoma maydis (Corn smut fungus).